Here is a 199-residue protein sequence, read N- to C-terminus: Recombination protein RecR (199 aa).

The segment at 57–72 (CEICGNLDTKSICHIC) adopts a C4-type zinc-finger fold. In terms of domain architecture, Toprim spans 80–175 (STIAIVETVA…KISRLASGIP (96 aa)).

It belongs to the RecR family.

In terms of biological role, may play a role in DNA repair. It seems to be involved in an RecBC-independent recombinational process of DNA repair. It may act with RecF and RecO. In Rickettsia prowazekii (strain Madrid E), this protein is Recombination protein RecR.